The primary structure comprises 1013 residues: MDIS1-interacting receptor like kinase 1 (1013 aa).

The first 23 residues, 1–23 (MKMKIIVLFLYYCYIGSTSSVLA), serve as a signal peptide directing secretion. Residues 24-633 (SIDNVNELSV…SSHSSLHGKR (610 aa)) lie on the Extracellular side of the membrane. Residues Asn61, Asn82, Asn101, Asn137, Asn146, Asn151, and Asn155 are each glycosylated (N-linked (GlcNAc...) asparagine). LRR repeat units lie at residues 70-94 (NGNV…ISQL), 95-117 (SSLV…SIPP), 119-137 (KSID…LFSN), 139-163 (SLGL…LGNL), 164-186 (VSLE…SFKN), 187-213 (LQKL…QLPS), 215-234 (ETAI…EFGN), 235-259 (INSL…LGKL), 260-283 (KSLE…IGSI), 284-307 (TTLK…ITKL), 308-331 (KNLQ…ISSL), 333-355 (QLQV…LGKN), 357-379 (PLQW…LCNK), 381-403 (NLTK…LSTC), 405-426 (SLVR…GFGK), 427-451 (LEKL…ISDS), 453-475 (SLSF…ILSI), 477-498 (NLQA…QFQD), 499-523 (CPSL…IASC), 525-547 (KLVS…ITTM), 548-571 (SALA…IGTS), and 573-595 (ALEL…GFLK). An N-linked (GlcNAc...) asparagine glycan is attached at Asn199. Asn271 carries N-linked (GlcNAc...) asparagine glycosylation. An N-linked (GlcNAc...) asparagine glycan is attached at Asn341. Asn381, Asn389, and Asn417 each carry an N-linked (GlcNAc...) asparagine glycan. N-linked (GlcNAc...) asparagine glycans are attached at residues Asn535, Asn557, and Asn578. Residues 634–654 (IVAGWLIGIASVLALGILTIV) form a helical membrane-spanning segment. Residues 655 to 1013 (TRTLYKKWYS…FSTSPVNGLL (359 aa)) are Cytoplasmic-facing. Thr691 carries the post-translational modification Phosphothreonine. Positions 699 to 983 (IKESNMIGMG…SMLGEAKPRR (285 aa)) constitute a Protein kinase domain. ATP contacts are provided by residues 705–713 (IGMGATGIV) and Lys728. A Phosphothreonine; by autocatalysis modification is found at Thr710. 2 positions are modified to phosphothreonine; by autocatalysis: Thr741 and Thr742. Phosphotyrosine occurs at positions 777 and 818. Asp831 acts as the Proton acceptor in catalysis. Thr862 bears the Phosphothreonine; by autocatalysis mark. Ser864 carries the post-translational modification Phosphoserine; by autocatalysis. Phosphotyrosine is present on Tyr872. A Phosphotyrosine; by autocatalysis modification is found at Tyr879. Phosphothreonine; by autocatalysis occurs at positions 880 and 992. Residues 976–1013 (LGEAKPRRKSNSNEENTSRSLAEKHSSVFSTSPVNGLL) form a disordered region. A compositionally biased stretch (polar residues) spans 1002 to 1013 (SVFSTSPVNGLL).

The protein belongs to the protein kinase superfamily. Ser/Thr protein kinase family. Homodimer. Interacts with MDIS1 and LURE1.2. In terms of processing, autophosphorylation induced by the interaction with LURE1.2. Expressed in pollen tubes.

The protein localises to the cell membrane. The enzyme catalyses L-seryl-[protein] + ATP = O-phospho-L-seryl-[protein] + ADP + H(+). The catalysed reaction is L-threonyl-[protein] + ATP = O-phospho-L-threonyl-[protein] + ADP + H(+). In terms of biological role, involved in the regulation of procambium maintenance and polarity during vascular-tissue development. Involved in the pollen tube perception of the female signal. Phosphorylates MDSI1. This Arabidopsis thaliana (Mouse-ear cress) protein is MDIS1-interacting receptor like kinase 1.